Here is a 113-residue protein sequence, read N- to C-terminus: U11-theraphotoxin-Hhn1f (113 aa).

The first 21 residues, 1–21 (MNTVRVTFLLVFVLAVSLGQA), serve as a signal peptide directing secretion. The propeptide occupies 22–74 (DKDENRMEMQEKTEQGKSYLDFAENLLLQKLEELEAKLLEEDSKESRNSRQKR). Residues 61–82 (EEDSKESRNSRQKRCIGEGVPC) form a disordered region. 3 disulfide bridges follow: Cys75–Cys90, Cys82–Cys95, and Cys89–Cys110.

This sequence belongs to the neurotoxin 14 (magi-1) family. 01 (HNTX-16) subfamily. In terms of tissue distribution, expressed by the venom gland.

The protein localises to the secreted. Its function is as follows. Probable ion channel inhibitor. The chain is U11-theraphotoxin-Hhn1f from Cyriopagopus hainanus (Chinese bird spider).